Here is a 122-residue protein sequence, read N- to C-terminus: UPF0231 protein VIBHAR_03438 (122 aa).

This sequence belongs to the UPF0231 family.

This chain is UPF0231 protein VIBHAR_03438, found in Vibrio campbellii (strain ATCC BAA-1116).